The chain runs to 458 residues: UDP-N-acetylmuramoylalanine--D-glutamate ligase (458 aa).

124 to 130 provides a ligand contact to ATP; it reads GSDGKTT.

The protein belongs to the MurCDEF family.

The protein localises to the cytoplasm. The catalysed reaction is UDP-N-acetyl-alpha-D-muramoyl-L-alanine + D-glutamate + ATP = UDP-N-acetyl-alpha-D-muramoyl-L-alanyl-D-glutamate + ADP + phosphate + H(+). The protein operates within cell wall biogenesis; peptidoglycan biosynthesis. Functionally, cell wall formation. Catalyzes the addition of glutamate to the nucleotide precursor UDP-N-acetylmuramoyl-L-alanine (UMA). This is UDP-N-acetylmuramoylalanine--D-glutamate ligase from Clostridium botulinum (strain Kyoto / Type A2).